Reading from the N-terminus, the 906-residue chain is Catenin alpha-1 (906 aa).

Thr2 is subject to N-acetylthreonine. An involved in homodimerization region spans residues 2–228 (TAVHTGNINF…PILYTASQAC (227 aa)). A Glycyl lysine isopeptide (Lys-Gly) (interchain with G-Cter in SUMO2) cross-link involves residue Lys57. Residues 97–148 (VRKQCDLMKSAAGEFADDPCSSVKRGNMVRAARALLSAVTRLLILADMADVY) are interaction with JUP and CTNNB1. 4 positions are modified to phosphoserine: Ser264, Ser268, Ser295, and Ser297. The interaction with alpha-actinin stretch occupies residues 325 to 394 (TRDDRRERIV…AVMDHVSDSF (70 aa)). Thr634 carries the post-translational modification Phosphothreonine. Ser641 carries the phosphoserine modification. Thr645 bears the Phosphothreonine mark. 2 positions are modified to phosphoserine: Ser652 and Ser655. Position 658 is a phosphothreonine (Thr658). A Glycyl lysine isopeptide (Lys-Gly) (interchain with G-Cter in SUMO2) cross-link involves residue Lys797. Ser851 bears the Phosphoserine mark. The span at 864–880 (PEKKPLVKREKQDETQT) shows a compositional bias: basic and acidic residues. The disordered stretch occupies residues 864 to 894 (PEKKPLVKREKQDETQTKIKRASQKKHVNPV). Residues 881-891 (KIKRASQKKHV) are compositionally biased toward basic residues.

This sequence belongs to the vinculin/alpha-catenin family. As to quaternary structure, monomer and homodimer; the monomer preferentially binds to CTNNB1 and the homodimer to actin. Component of an cadherin:catenin adhesion complex composed of at least of CDH26, beta-catenin/CTNNB1, alpha-catenin/CTNNA1 and p120 catenin/CTNND1. Possible component of an E-cadherin/ catenin adhesion complex together with E-cadherin/CDH1 and beta-catenin/CTNNB1 or gamma-catenin/JUP; the complex is located to adherens junctions. The stable association of CTNNA1 is controversial as CTNNA1 was shown not to bind to F-actin when assembled in the complex. Alternatively, the CTNNA1-containing complex may be linked to F-actin by other proteins such as LIMA1. Binds AFDN and F-actin. Interacts with ARHGAP21. Interacts with AJUBA. Interacts with LIMA1. Interacts with vinculin/VCL. Interacts with TJP2/ZO2 (via N-terminus). Interacts with TJP1/ZO1 (via N-terminus). In terms of processing, sumoylated. Post-translationally, phosphorylation seems to contribute to the strength of cell-cell adhesion rather than to the basic capacity for cell-cell adhesion.

The protein localises to the cytoplasm. Its subcellular location is the cytoskeleton. It is found in the cell junction. It localises to the adherens junction. The protein resides in the cell membrane. The protein localises to the nucleus. In terms of biological role, associates with the cytoplasmic domain of a variety of cadherins. The association of catenins to cadherins produces a complex which is linked to the actin filament network, and which seems to be of primary importance for cadherins cell-adhesion properties. Can associate with both E- and N-cadherins. Originally believed to be a stable component of E-cadherin/catenin adhesion complexes and to mediate the linkage of cadherins to the actin cytoskeleton at adherens junctions. In contrast, cortical actin was found to be much more dynamic than E-cadherin/catenin complexes and CTNNA1 was shown not to bind to F-actin when assembled in the complex suggesting a different linkage between actin and adherens junctions components. The homodimeric form may regulate actin filament assembly and inhibit actin branching by competing with the Arp2/3 complex for binding to actin filaments. Involved in the regulation of WWTR1/TAZ, YAP1 and TGFB1-dependent SMAD2 and SMAD3 nuclear accumulation. May play a crucial role in cell differentiation. The chain is Catenin alpha-1 from Bos taurus (Bovine).